We begin with the raw amino-acid sequence, 926 residues long: Isoleucine--tRNA ligase (926 aa).

The interval 1-21 is disordered; sequence MKMKETLQLGKTAFPMRGNLP. The short motif at 57–67 is the 'HIGH' region element; it reads PYANGNIHLGH. Glu552 serves as a coordination point for L-isoleucyl-5'-AMP. The short motif at 593-597 is the 'KMSKS' region element; that stretch reads KMSKS. Residue Lys596 participates in ATP binding. Zn(2+) contacts are provided by Cys886, Cys889, Cys906, and Cys909.

It belongs to the class-I aminoacyl-tRNA synthetase family. IleS type 1 subfamily. As to quaternary structure, monomer. Zn(2+) serves as cofactor.

The protein localises to the cytoplasm. The enzyme catalyses tRNA(Ile) + L-isoleucine + ATP = L-isoleucyl-tRNA(Ile) + AMP + diphosphate. Catalyzes the attachment of isoleucine to tRNA(Ile). As IleRS can inadvertently accommodate and process structurally similar amino acids such as valine, to avoid such errors it has two additional distinct tRNA(Ile)-dependent editing activities. One activity is designated as 'pretransfer' editing and involves the hydrolysis of activated Val-AMP. The other activity is designated 'posttransfer' editing and involves deacylation of mischarged Val-tRNA(Ile). This Enterococcus faecalis (strain ATCC 700802 / V583) protein is Isoleucine--tRNA ligase.